We begin with the raw amino-acid sequence, 458 residues long: Argininosuccinate lyase (458 aa).

It belongs to the lyase 1 family. Argininosuccinate lyase subfamily.

Its subcellular location is the cytoplasm. It catalyses the reaction 2-(N(omega)-L-arginino)succinate = fumarate + L-arginine. The protein operates within amino-acid biosynthesis; L-arginine biosynthesis; L-arginine from L-ornithine and carbamoyl phosphate: step 3/3. The chain is Argininosuccinate lyase from Geotalea daltonii (strain DSM 22248 / JCM 15807 / FRC-32) (Geobacter daltonii).